Reading from the N-terminus, the 515-residue chain is Recombining binding protein suppressor of hairless-like protein (515 aa).

A disordered region spans residues 1–40 (MDPRETTDPSLPPGPLTHLSLPDSSEVRLQSDGPSLLGSW). 3 DNA-binding regions span residues 76 to 86 (QKSYGNEKRFF), 191 to 196 (SKPSQK), and 218 to 223 (RLRSQT). The 91-residue stretch at 384–474 (PLISTLELSG…YPSPFSFTYT (91 aa)) folds into the IPT/TIG domain.

The protein belongs to the Su(H) family. Interacts weakly with EBNA2. Does not interact with any Notch proteins. As to expression, highly expressed in lung. Also detected in spleen, and brain.

The protein localises to the nucleus. Putative transcription factor, which cooperates with EBNA2 to activate transcription. This chain is Recombining binding protein suppressor of hairless-like protein (Rbpjl), found in Mus musculus (Mouse).